The primary structure comprises 411 residues: Protein-lysine 6-oxidase (411 aa).

A signal peptide spans 1 to 21; it reads MRFAWTVLFLGQLQFCPLLRC. Residues 22-162 constitute a propeptide, removed by BMP1; the sequence is APQAPREPPA…PPSHVDRMVG (141 aa). Positions 60–168 are disordered; sequence PQRRRDSSAT…RMVGDDPYNP (109 aa). N91 and N138 each carry an N-linked (GlcNAc...) asparagine glycan. The residue at position 181 (Y181) is a Sulfotyrosine. The segment at 207-411 is lysyl-oxidase like; sequence PDLVPDPYYI…YASGCTISPY (205 aa). Cystine bridges form between C232–C238, C285–C334, C318–C324, C345–C355, and C392–C406. Cu cation contacts are provided by H286, H288, and H290. Positions 314–349 form a cross-link, lysine tyrosylquinone (Lys-Tyr); the sequence is KASFCLEDTSCDYGYHRRFACTAHTQGLSPGCYDTY. At Y349 the chain carries 2',4',5'-topaquinone.

This sequence belongs to the lysyl oxidase family. In terms of assembly, interacts with MFAP4. Interacts (via propeptide) with EFEMP2; this interaction is strong and facilitates formation of ternary complexes with ELN during elastic fiber assembly; this interaction limits interaction of EFEMP2 with FBLN5. Cu cation serves as cofactor. Requires lysine tyrosylquinone residue as cofactor. The lysine tyrosylquinone cross-link (LTQ) is generated by condensation of the epsilon-amino group of a lysine with a topaquinone produced by oxidation of tyrosine. Post-translationally, proteolytically cleaved by BMP1 which removes the propeptide. Also proteolytically cleaved by ADAMTS2 and ADAMTS14, but not by ADAMTS3, at an additional cleavage site downstream of the BMP1 cleavage site. The propeptide plays a role in directing the deposition of this enzyme to elastic fibers, via interaction with tropoelastin. Cleavage by BMP1 to remove the propeptide does not increase enzymatic activity but increases binding to collagen. Cleavage by ADAMTS2 produces a form with reduced collagen-binding activity. In terms of processing, sulfated at Tyr-181 and also at either Tyr-177 or Tyr-178 which enhances binding to collagen. In terms of tissue distribution, aorta and lung.

The protein localises to the secreted. It is found in the extracellular space. The catalysed reaction is L-lysyl-[protein] + O2 + H2O = (S)-2-amino-6-oxohexanoyl-[protein] + H2O2 + NH4(+). Responsible for the post-translational oxidative deamination of peptidyl lysine residues in precursors to fibrous collagen and elastin. Regulator of Ras expression. May play a role in tumor suppression. Plays a role in the aortic wall architecture. The protein is Protein-lysine 6-oxidase of Rattus norvegicus (Rat).